The following is a 321-amino-acid chain: Transcription factor ATOH8 (321 aa).

Disordered regions lie at residues 59 to 193 and 203 to 222; these read GLRD…SSYS and HQDSSASPRKRPGEATAASS. Residues 70–85 show a composition bias toward pro residues; the sequence is VPVPVPVPVPVAPAVP. Residues 93 to 109 are compositionally biased toward basic and acidic residues; the sequence is AGERGGSRAPEVSDARK. Residues 121-132 show a composition bias toward pro residues; the sequence is LPTPPPPPPPAP. Residues 133-143 show a composition bias toward low complexity; the sequence is QSQAPGGPEAQ. Residues 160–186 show a composition bias toward pro residues; the sequence is PARPAPSAPPAPPAPPESTVRPAPPTR. Residues 230 to 243 are basic motif; degenerate; the sequence is TRRLLANARERTRV. The 53-residue stretch at 230-282 folds into the bHLH domain; it reads TRRLLANARERTRVHTISAAFEALRKQVPCYSYGQKLSKLAILRIACNYILSL. The segment at 244–282 is helix-loop-helix motif; that stretch reads HTISAAFEALRKQVPCYSYGQKLSKLAILRIACNYILSL.

In terms of assembly, efficient DNA binding requires dimerization with another bHLH protein. Interacts with NEUROG3 and NEUROD1. Interacts with ZFPM2; mediates indirect interaction with GATA4. Forms a heterodimer with TCF3; repress transcription of TCF3 and TCF3/NEUROG3 dimer-induced transactivation of E box-dependent promoters. Expressed in lung, liver, kidney, heart and pancreas. Expressed in endothel of umbilical vessels.

It localises to the nucleus. It is found in the nucleus speckle. The protein localises to the cytoplasm. Functionally, transcription factor that binds a palindromic (canonical) core consensus DNA sequence 5'-CANNTG- 3' known as an E-box element, possibly as a heterodimer with other bHLH proteins. Regulates endothelial cell proliferation, migration and tube-like structures formation. Modulates endothelial cell differentiation through NOS3. May be implicated in specification and differentiation of neuronal cell lineages in the brain. May participate in kidney development and may be involved in podocyte differentiation. During early embryonic development is involved in tissue-specific differentiation processes that are dependent on class II bHLH factors and namely modulates the differentiation program initiated by the pro-endocrine factor NEUROG3. During myogenesis, may play a role during the transition of myoblasts from the proliferative phase to the differentiation phase. Positively regulates HAMP transcription in two ways, firstly by acting directly on the HAMP promoter via E-boxes binding and indirectly through increased phosphorylation of SMAD protein complex. Repress NEUROG3-dependent gene activation in a gene-specific manner through at least two mechanisms; requires only either the sequestering of a general partner such as TCF3 through heterodimerization, either also requires binding of the bHLH domain to DNA via a basic motif. The polypeptide is Transcription factor ATOH8 (Homo sapiens (Human)).